The primary structure comprises 201 residues: MARYTGPITRKSRRLRVDLVGGDQAFERRPYPPGQHGRARIKESEYLLQLQEKQKARFTYGVMEKQFRLYYKEANNRPGKTGENLLRILESRLDNVVYRAGLARTRRQARQLVTHGHLLVNNKKVDIPSYRVSQYDIIDVKEKSLSTLPFQVARETQGDRPIPGWLQVVGGRLRVLVHQLPERAQIDVPLQEQLIVEYYSK.

The S4 RNA-binding domain maps to 91 to 155 (SRLDNVVYRA…STLPFQVARE (65 aa)).

Belongs to the universal ribosomal protein uS4 family. In terms of assembly, part of the 30S ribosomal subunit. Contacts protein S5. The interaction surface between S4 and S5 is involved in control of translational fidelity.

In terms of biological role, one of the primary rRNA binding proteins, it binds directly to 16S rRNA where it nucleates assembly of the body of the 30S subunit. Its function is as follows. With S5 and S12 plays an important role in translational accuracy. This is Small ribosomal subunit protein uS4 from Rhodococcus jostii (strain RHA1).